We begin with the raw amino-acid sequence, 445 residues long: Allantoinase (445 aa).

6 residues coordinate Zn(2+): His-63, His-65, Lys-150, His-186, His-238, and Asp-311. The residue at position 150 (Lys-150) is an N6-carboxylysine.

Belongs to the metallo-dependent hydrolases superfamily. Allantoinase family. Homotetramer. Zn(2+) is required as a cofactor. In terms of processing, carboxylation allows a single lysine to coordinate two zinc ions.

The enzyme catalyses (S)-allantoin + H2O = allantoate + H(+). It participates in nitrogen metabolism; (S)-allantoin degradation; allantoate from (S)-allantoin: step 1/1. In terms of biological role, catalyzes the conversion of allantoin (5-ureidohydantoin) to allantoic acid by hydrolytic cleavage of the five-member hydantoin ring. This Streptomyces avermitilis (strain ATCC 31267 / DSM 46492 / JCM 5070 / NBRC 14893 / NCIMB 12804 / NRRL 8165 / MA-4680) protein is Allantoinase.